The chain runs to 1360 residues: Zinc finger protein GLI1 (1360 aa).

Positions 198 to 245 (DTIGSKRLEDGSEGDISSPASVGTQDPLLGLLDGRDDLEKDDGKHEPE) are disordered. Residues 230-245 (DGRDDLEKDDGKHEPE) show a composition bias toward basic and acidic residues. The C2H2-type 1 zinc-finger motif lies at 250–275 (TNCHWESCTKEFDTQEHLVHHINNEH). The interaction with DNA stretch occupies residues 298–306 (KAQYMLVVH). 3 consecutive C2H2-type zinc fingers follow at residues 316–340 (HKCT…LRSH), 346–371 (YVCE…NRTH), and 377–402 (YVCK…KTVH). Interaction with DNA regions lie at residues 360–365 (ASDRAK) and 390–396 (DPSSLRK). 4 disordered regions span residues 390–434 (DPSS…NVKG), 457–500 (ITLK…SFED), 718–740 (IIHP…RTGG), and 1120–1213 (YMNY…IQPQ). The span at 461–473 (SQPSPGGQSSCSS) shows a compositional bias: low complexity. Residues 474-496 (ERSPLGSTNNNDSGVEMNANTGG) are compositionally biased toward polar residues. Positions 1134–1143 (SPSSQDSQSS) are enriched in low complexity. Residues 1173–1190 (RQHSVSSQSTYMGSPNQL) show a composition bias toward polar residues.

This sequence belongs to the GLI C2H2-type zinc-finger protein family.

The protein localises to the cytoplasm. It localises to the nucleus. In terms of biological role, acts as a transcriptional activator. Binds to the DNA consensus sequence 5'-GACCACCCA-3'. May regulate the transcription of specific genes during normal development. Mediates SHH signaling. Plays a role in cell proliferation and differentiation via its role in SHH signaling. This Xenopus laevis (African clawed frog) protein is Zinc finger protein GLI1 (gli1).